Consider the following 3189-residue polypeptide: Beauvericin nonribosomal cyclodepsipeptide synthetase (3189 aa).

The interval 73-466 (HAMYEISQHV…EQLQSAADDA (394 aa)) is condensation 1. The interval 202-223 (DSLPLTPDSSGGSDSDSPSTLK) is disordered. The span at 208 to 220 (PDSSGGSDSDSPS) shows a compositional bias: low complexity. The interval 507–901 (AESPSDPAVL…GRIDSQVKIR (395 aa)) is adenylation 1. The Carrier 1 domain maps to 1036–1112 (TLETGPEARL…RLQAVMSGDS (77 aa)). An O-(pantetheine 4'-phosphoryl)serine modification is found at Ser1073. The tract at residues 1136–1569 (SYSQGRLWFL…KSLISVLPLT (434 aa)) is condensation 2. The segment at 1599–2004 (FRSQVATCPD…GRMDFQFKIR (406 aa)) is adenylation 2. The S-adenosyl-L-methionine-dependent N-methyltransferase stretch occupies residues 2072 to 2211 (MYNGIDAISP…FPTVEYLTRV (140 aa)). Carrier domains lie at 2557 to 2631 (CPIS…REGL) and 2654 to 2728 (APRN…ELGQ). Residues Ser2591 and Ser2688 each carry the O-(pantetheine 4'-phosphoryl)serine modification. Residues 2773-3181 (QDVYPATHMQ…AYLMEEVCRL (409 aa)) form a condensation 3 region.

This sequence belongs to the NRP synthetase family.

It carries out the reaction 3 (R)-2-hydroxy-3-methylbutanoate + 3 L-phenylalanine + 3 S-adenosyl-L-methionine + 6 ATP = beauvericin + 6 AMP + 3 S-adenosyl-L-homocysteine + 6 diphosphate + 6 H(+). Functionally, beauvericin nonribosomal cyclodepsipeptide synthetase; part of the gene cluster that mediates the biosynthesis of beauvericin (BEA), a non-ribosomal cyclic hexadepsipeptide that shows antibiotic, antifungal, insecticidal, and cancer cell antiproliferative and antihaptotactic activity. Ketoisovalerate reductase BEA2 catalyzes the NADPH-specific reduction of ketoisovaleric acid to hydroxyisovalerate, a precursor for beauvericin biosynthesis. The nonribosomal cyclodepsipeptide synthetase BEA1 then catalyzes the formation of beauvericin via condensation and cyclization of 3 dipeptidol monomers, each composed of one unit of hydroxyisovalerate and one unit of N-methyl-phenylalanine. The chain is Beauvericin nonribosomal cyclodepsipeptide synthetase (Beas) from Beauveria bassiana (White muscardine disease fungus).